The following is a 291-amino-acid chain: ATP synthase gamma chain (291 aa).

It belongs to the ATPase gamma chain family. F-type ATPases have 2 components, CF(1) - the catalytic core - and CF(0) - the membrane proton channel. CF(1) has five subunits: alpha(3), beta(3), gamma(1), delta(1), epsilon(1). CF(0) has three main subunits: a, b and c.

Its subcellular location is the cell inner membrane. Functionally, produces ATP from ADP in the presence of a proton gradient across the membrane. The gamma chain is believed to be important in regulating ATPase activity and the flow of protons through the CF(0) complex. This chain is ATP synthase gamma chain, found in Pelodictyon phaeoclathratiforme (strain DSM 5477 / BU-1).